The sequence spans 289 residues: MKEQTTDRTNGGTSNAFTIPGTEVRMMSSRNENRTYHIFISKPSTPPPPAGYPVIYLLDANSVFGTMTEAVRIQGRRPEKTGVIPAVIVGIGYETAEPFSSARHRDFTMPTAQSKLPERPDGREWPEHGGAEGFFRFIEEDLKPEIERDYQIDKKRQTIFGHSLGGLFVLQVLLTKPDAFQTYIAGSPSIHWNKPFILKKTDHFVSLTKKNNQPINILLAAGELEQHHKSRMNDNARELYERLAVLSEQGIRAEFCEFSGEGHISVLPVLVSRALRFALHPDGPHLSMG.

Catalysis depends on charge relay system residues Ser163, Glu225, and His263.

The protein belongs to the esterase D family.

It localises to the cytoplasm. Functionally, catalyzes the hydrolysis of the trilactone cycle of ferri-bacillibactin (ferri-BB) complex, leading to the formation of bacillibactin monomers and to cytosolic iron release, thus making iron available for metabolic use. Can also hydrolyze bacillibactin (BB), however the catalytic efficiency for ferri-BB hydrolysis is much higher than for BB. The polypeptide is Ferri-bacillibactin esterase BesA (besA) (Bacillus subtilis (strain 168)).